The sequence spans 491 residues: Monothiol glutaredoxin-S11 (491 aa).

Glutaredoxin domains follow at residues 151 to 253, 287 to 389, and 394 to 491; these read NKRL…NIPL, KERL…GIVA, and EDRL…TLSE. Position 411 (K411) interacts with glutathione. [2Fe-2S] cluster is bound at residue C419. Residues R448, F460, and 473–474 each bind glutathione; that span reads CD.

Belongs to the glutaredoxin family. CGFS subfamily.

It localises to the cytoplasm. May only reduce GSH-thiol disulfides, but not protein disulfides. This chain is Monothiol glutaredoxin-S11 (GRXS11), found in Oryza sativa subsp. japonica (Rice).